A 403-amino-acid polypeptide reads, in one-letter code: MGELSMQEMPLPALFEQGSKIHASAESSVDQDTVRKGCEILRQCEEMIGKLGLFSVNETKEDISTANLKYILVPYYLAELTEKVADNDRIKVLKASQAKLKEFISFCETMELVPEEEIETSTQGGANSSVDRRAKKIARFKRQRAAESKLLEIKERKERRGRSTKAAALSSPVETEEDDVLDDDGEEEREAWLTTISLGLCKAFDLLEMLKKEEEILSAVKEKQLQNGEKEFSQAILDERTKKVETWHRDAAARAHYTKPAAPITCATFAQDVIEGRAKVSQAHEHKHQPLIFGPASLVGRNPTTEREKIAAQVFQPHYRLPTMSIEEAGLTEMNMMNEWQERNVKLMEEANSSWYKDAPKSRPGEDDEEDDDDAAQDKARAWDDWKDDNPRGAGNKKLTPCG.

2 disordered regions span residues glutamate 158–aspartate 184 and alanine 351–glycine 403. Composition is skewed to acidic residues over residues glutamate 174 to aspartate 184 and glutamate 366 to alanine 375. A compositionally biased stretch (basic and acidic residues) spans alanine 376–proline 391.

The protein belongs to the IGBP1/TAP42 family. In terms of assembly, interacts with NPP4 and NPP5, two catalytic subunits (subunit C) of PP2A.

It localises to the cytoplasm. The protein localises to the nucleus. Functionally, involved in the regulation of the TOR signaling pathway. Seems to act as a regulator of PP2A catalytic activity. The sequence is that of PP2A regulatory subunit TAP46 from Nicotiana benthamiana.